The chain runs to 833 residues: ERAD-associated E3 ubiquitin-protein ligase component HRD3 (833 aa).

The first 20 residues, 1 to 20 (MITLLLYLCVICNAIVLIRA), serve as a signal peptide directing secretion. Asn101, Asn123, and Asn142 each carry an N-linked (GlcNAc...) asparagine glycan. Residues 103-139 (SEATYTLSQIHLWSQYNFPHNMTLAHKYLEKFNDLTH) form a Sel1-like 1 repeat. Sel1-like repeat units lie at residues 143–186 (HSAI…QLGN), 187–222 (LKAKQVLAYKYYSGFNVPRNFHKSLVLYRDIAEQLR), 413–445 (GRACIDLGLINQYITNNISQAISYYMKAMKTQA), 552–595 (ETAQ…KQGN), 596–627 (IDAGVVAGDIYFQMQNYSKAMALYQGAALKYS), and 628–663 (IQAIWNLGYMHEHGLGVNRDFHLAKRYYDQVSEHDH). Asn429 carries N-linked (GlcNAc...) asparagine glycosylation. The N-linked (GlcNAc...) asparagine glycan is linked to Asn611. Residues 768 to 788 (LVTMGCILGIFLLSILMSTLA) traverse the membrane as a helical segment. The tract at residues 805–824 (NGNRQQEQQQQQQAQGPPGW) is disordered. Low complexity predominate over residues 809-819 (QQEQQQQQQAQ).

The protein belongs to the sel-1 family. In terms of assembly, component of the HRD1 ubiquitin ligase complex which contains the E3 ligase HRD1, its cofactors HRD3, USA1 and DER1, substrate recruiting factor YOS9 and CDC48-binding protein UBX2. Within the complex, interacts directly with HRD1 and YOS9 (via N-terminus). In ERAD-L, HRD3 and YOS9 jointly bind misfolded glycoproteins in the endoplasmic reticulum (ER) lumen. Movement of ERAD-L substrates through the ER membrane is facilitated by HRD1 and DER1 which have lateral gates facing each other and which distort the membrane region between the lateral gates, making it much thinner than a normal phospholipid bilayer. Substrates insert into the membrane as a hairpin loop with one strand interacting with DER1 and the other with HRD1. The HRD1 complex interacts with the heterotrimeric CDC48-NPL4-UFD1 ATPase complex which is recruited by UBX2 via its interaction with CDC48 and which moves ubiquitinated substrates to the cytosol for targeting to the proteasome. The HRD1 complex interacts with the ERAD substrates HMG1 and HMG2. Interacts with KAR2.

The protein resides in the endoplasmic reticulum membrane. Functionally, component of the endoplasmic reticulum quality control (ERQC) system involved in ubiquitin-dependent degradation of misfolded endoplasmic reticulum proteins. Component of the HRD1 ubiquitin ligase complex, which is part of the ERAD-L and ERAD-M pathways responsible for the rapid degradation of soluble lumenal and membrane proteins with misfolded lumenal domains (ERAD-L), or ER-membrane proteins with misfolded transmembrane domains (ERAD-M). ERAD-L substrates are ubiquitinated through HRD1 in conjunction with the E2 ubiquitin-conjugating enzymes UBC1 and UBC7-CUE1. Ubiquitinated substrates are then removed to the cytosol via the action of the CDC48-NPL4-UFD1 ATPase complex and targeted to the proteasome. ERAD-M substrates are processed by the same HRD1-HRD3 core complex, but only a subset of the other components is required for ERAD-M. Stabilizes the HRD1 ubiquitin-protein ligase. Also functions in recruiting misfolded protein substrates in conjunction with YOS9. In Saccharomyces cerevisiae (strain ATCC 204508 / S288c) (Baker's yeast), this protein is ERAD-associated E3 ubiquitin-protein ligase component HRD3 (HRD3).